A 260-amino-acid chain; its full sequence is Putative hydro-lyase Bmul_5125/BMULJ_03391 (260 aa).

It belongs to the D-glutamate cyclase family.

The sequence is that of Putative hydro-lyase Bmul_5125/BMULJ_03391 from Burkholderia multivorans (strain ATCC 17616 / 249).